The chain runs to 168 residues: G/U mismatch-specific DNA glycosylase (168 aa).

Belongs to the uracil-DNA glycosylase (UDG) superfamily. TDG/mug family. As to quaternary structure, binds DNA as a monomer.

Its subcellular location is the cytoplasm. It catalyses the reaction Specifically hydrolyzes mismatched double-stranded DNA and polynucleotides, releasing free uracil.. Excises ethenocytosine and uracil, which can arise by alkylation or deamination of cytosine, respectively, from the corresponding mispairs with guanine in ds-DNA. It is capable of hydrolyzing the carbon-nitrogen bond between the sugar-phosphate backbone of the DNA and the mispaired base. The complementary strand guanine functions in substrate recognition. Required for DNA damage lesion repair in stationary-phase cells. The protein is G/U mismatch-specific DNA glycosylase of Shigella dysenteriae serotype 1 (strain Sd197).